The primary structure comprises 161 residues: Nucleotide-binding protein Glov_3198 (161 aa).

Belongs to the YajQ family.

Its function is as follows. Nucleotide-binding protein. The protein is Nucleotide-binding protein Glov_3198 of Trichlorobacter lovleyi (strain ATCC BAA-1151 / DSM 17278 / SZ) (Geobacter lovleyi).